The sequence spans 368 residues: Alanine racemase (368 aa).

Lysine 40 serves as the catalytic Proton acceptor; specific for D-alanine. Lysine 40 is modified (N6-(pyridoxal phosphate)lysine). Arginine 134 contributes to the substrate binding site. Tyrosine 263 (proton acceptor; specific for L-alanine) is an active-site residue. Residue methionine 310 coordinates substrate.

It belongs to the alanine racemase family. It depends on pyridoxal 5'-phosphate as a cofactor.

The catalysed reaction is L-alanine = D-alanine. It participates in amino-acid biosynthesis; D-alanine biosynthesis; D-alanine from L-alanine: step 1/1. In terms of biological role, catalyzes the interconversion of L-alanine and D-alanine. May also act on other amino acids. The polypeptide is Alanine racemase (alr) (Listeria monocytogenes serovar 1/2a (strain ATCC BAA-679 / EGD-e)).